Reading from the N-terminus, the 229-residue chain is MNVEEMKKAVARAALEFIEDDMVVGLGTGSTTAYFIRYLGEMIEKGKVEDIYGVPPPIKQKFLRMESGVPVLSLDQVDAIDIAVDGADEVDPNLNLIKGRGAALTMEKIIEYRAGTFIVLVDESKLVDYLCQKMPVPIEVIPAAWKAILEELSIFNAKAELRMGVKKDGPVVTENGNFIIDAKFPRIDDPLDMEIELNTIPGVVENGIFADIADIVLVGTKEGVKRLER.

Residues 28–31 (TGST), 85–88 (DGAD), and 98–101 (KGRG) contribute to the substrate site. Glu-107 (proton acceptor) is an active-site residue. Residue Lys-125 coordinates substrate.

The protein belongs to the ribose 5-phosphate isomerase family. In terms of assembly, homodimer.

The enzyme catalyses aldehydo-D-ribose 5-phosphate = D-ribulose 5-phosphate. The protein operates within carbohydrate degradation; pentose phosphate pathway; D-ribose 5-phosphate from D-ribulose 5-phosphate (non-oxidative stage): step 1/1. Functionally, catalyzes the reversible conversion of ribose-5-phosphate to ribulose 5-phosphate. The polypeptide is Ribose-5-phosphate isomerase A (Pyrococcus furiosus (strain ATCC 43587 / DSM 3638 / JCM 8422 / Vc1)).